The sequence spans 169 residues: Succinate dehydrogenase cytochrome b560 subunit, mitochondrial (169 aa).

The N-terminal 29 residues, 1-29 (MAALLLRHVGRHCLRAHLSPQLCIRNAVP), are a transit peptide targeting the mitochondrion. The Mitochondrial matrix segment spans residues 30-62 (LGTTAKEEMERFWSKNTTLNRPLSPHISIYGWS). A helical membrane pass occupies residues 63-92 (LPMAMSICHRGTGIALSAGVSLFGLSALLV). Topologically, residues 93–112 (PGSFESHLEFVKSLCLGPAL) are mitochondrial intermembrane. A helical membrane pass occupies residues 113 to 137 (IHTAKFALVFPLMYHTWNGIRHLMW). H127 lines the heme b pocket. The Mitochondrial matrix segment spans residues 138–144 (DLGKGLT). The helical transmembrane segment at 145 to 166 (ISQLHQSGVAVLVLTVLSSVGL) threads the bilayer. The Mitochondrial intermembrane segment spans residues 167–169 (AAM).

It belongs to the cytochrome b560 family. In terms of assembly, component of complex II composed of four subunits: the flavoprotein (FP) SDHA, iron-sulfur protein (IP) SDHB, and a cytochrome b560 composed of SDHC and SDHD. The cofactor is heme b. In terms of processing, the N-terminus is blocked.

It is found in the mitochondrion inner membrane. It functions in the pathway carbohydrate metabolism; tricarboxylic acid cycle. Functionally, membrane-anchoring subunit of succinate dehydrogenase (SDH) that is involved in complex II of the mitochondrial electron transport chain and is responsible for transferring electrons from succinate to ubiquinone (coenzyme Q). SDH also oxidizes malate to the non-canonical enol form of oxaloacetate, enol-oxaloacetate. Enol-oxaloacetate, which is a potent inhibitor of the succinate dehydrogenase activity, is further isomerized into keto-oxaloacetate. In Bos taurus (Bovine), this protein is Succinate dehydrogenase cytochrome b560 subunit, mitochondrial (SDHC).